A 221-amino-acid polypeptide reads, in one-letter code: Cytidylate kinase (221 aa).

ATP is bound at residue 11–19 (GPCGAGKST).

This sequence belongs to the cytidylate kinase family. Type 1 subfamily.

It is found in the cytoplasm. It carries out the reaction CMP + ATP = CDP + ADP. It catalyses the reaction dCMP + ATP = dCDP + ADP. This chain is Cytidylate kinase, found in Mycoplasmopsis agalactiae (strain NCTC 10123 / CIP 59.7 / PG2) (Mycoplasma agalactiae).